The sequence spans 696 residues: Solute carrier family 53 member 1 (696 aa).

The Cytoplasmic segment spans residues 1–228; the sequence is MKFAEHLSAH…RVPPLGAAQP (228 aa). The region spanning 2–224 is the SPX domain; sequence KFAEHLSAHI…MKRLRVPPLG (223 aa). Positions 158–165 are important for inositol polyphosphate binding; the sequence is KILKKHDK. The helical transmembrane segment at 229–259 threads the bilayer; sequence APAWTTFRVGLFCGIFIVLNITLVLAAVFKL. At 260-264 the chain is on the extracellular side; it reads ETDRS. A helical membrane pass occupies residues 265–296; sequence IWPLIRIYRGGFLLIEFLFLLGINTYGWRQAG. Topologically, residues 297 to 309 are cytoplasmic; it reads VNHVLIFELNPRS. A helical membrane pass occupies residues 310-337; the sequence is NLSHQHLFEIAGFLGILWCLSLLACFFA. The Extracellular segment spans residues 338 to 343; it reads PISVIP. A helical transmembrane segment spans residues 344-365; sequence TYVYPLALYGFMVFFLINPTKT. The segment at residues 366–383 is an intramembrane region (helical); it reads FYYKSRFWLLKLLFRVFT. At 384-388 the chain is on the cytoplasmic side; the sequence is APFHK. A discontinuously helical membrane pass occupies residues 389–422; that stretch reads VGFADFWLADQLNSLSVILMDLEYMICFYSLELK. Asp398 and Asn401 together coordinate phosphate. The Extracellular portion of the chain corresponds to 423–429; the sequence is WDESKGL. The chain crosses the membrane as a discontinuously helical span at residues 430 to 471; the sequence is LPNNSEESGICHKYTYGVRAIVQCIPAWLRFIQCLRRYRDTK. Residues 439–643 enclose the EXS domain; it reads ICHKYTYGVR…LNADDQTLLE (205 aa). A topological domain (cytoplasmic) is located at residue Arg472. A helical membrane pass occupies residues 473–503; that stretch reads AFPHLVNAGKYSTTFFMVTFAALYSTHKERG. Lys482 and Tyr483 together coordinate phosphate. Over 504 to 506 the chain is Extracellular; the sequence is HSD. The chain crosses the membrane as a helical span at residues 507–534; that stretch reads TMVFFYLWIVFYIISSCYTLIWDLKMDW. At 535–553 the chain is on the cytoplasmic side; sequence GLFDKNAGENTFLREEIVY. The discontinuously helical transmembrane segment at 554–585 threads the bilayer; that stretch reads PQKAYYYCAIIEDVILRFAWTIQISITSTTLL. Arg570 is a phosphate binding site. At 586–587 the chain is on the extracellular side; sequence PH. The chain crosses the membrane as a helical span at residues 588–626; that stretch reads SGDIIATVFAPLEVFRRFVWNFFRLENEHLNNCGEFRAV. Arg603 and Arg604 together coordinate phosphate. The Cytoplasmic segment spans residues 627–696; that stretch reads RDISVAPLNA…IEDTDDEANT (70 aa). Ser668 is modified (phosphoserine). Residues 673 to 696 form a disordered region; the sequence is RLASQSKARDTKVLIEDTDDEANT. Thr690 is modified (phosphothreonine).

It belongs to the SYG1 (TC 2.A.94) family. Homodimer. Widely expressed. Detected in spleen, lymph node, thymus, leukocytes, bone marrow, heart, kidney, pancreas and skeletal muscle.

It localises to the cell membrane. It carries out the reaction phosphate(in) = phosphate(out). Its activity is regulated as follows. Allosterically activated by inositol hexakisphosphate (Ins6P). Its function is as follows. Inorganic ion transporter that mediates phosphate ion export across plasma membrane. Plays a major role in phosphate homeostasis, preventing intracellular phosphate accumulation and possible calcium phosphate precipitation, ultimately preserving calcium signaling. Binds inositol hexakisphosphate (Ins6P) and similar inositol polyphosphates, such as 5-diphospho-inositol pentakisphosphate (5-InsP7), which are important intracellular signaling molecules involved in regulation of phosphate flux. This is Solute carrier family 53 member 1 from Homo sapiens (Human).